A 747-amino-acid polypeptide reads, in one-letter code: Protein O-mannosyl-transferase 1 (747 aa).

7 helical membrane-spanning segments follow: residues 30–50 (PLVV…LGLL), 90–110 (FGHM…NFLW), 121–141 (VPVW…VPMA), 176–196 (LLES…LKFF), 205–225 (SVHW…AVGI), 228–248 (MGIF…WHLI), and 267–287 (VALL…HLML). MIR domains follow at residues 318–381 (PLEV…VKDP), 392–449 (PRPV…LDIV), and 453–513 (SNQD…VEEH). Residues Asn-435, Asn-471, and Asn-539 are each glycosylated (N-linked (GlcNAc...) asparagine). 3 consecutive transmembrane segments (helical) span residues 597–617 (IVIW…FFWY), 636–656 (WVLA…PFFL), and 660–680 (MLFL…LPIV).

It belongs to the glycosyltransferase 39 family.

It localises to the endoplasmic reticulum membrane. It carries out the reaction a di-trans,poly-cis-dolichyl beta-D-mannosyl phosphate + L-seryl-[protein] = 3-O-(alpha-D-mannosyl)-L-seryl-[protein] + a di-trans,poly-cis-dolichyl phosphate + H(+). The catalysed reaction is a di-trans,poly-cis-dolichyl beta-D-mannosyl phosphate + L-threonyl-[protein] = 3-O-(alpha-D-mannosyl)-L-threonyl-[protein] + a di-trans,poly-cis-dolichyl phosphate + H(+). It participates in protein modification; protein glycosylation. Functionally, transfers mannosyl residues to the hydroxyl group of serine or threonine residues. Coexpression of both POMT1 and POMT2 is necessary for enzyme activity, expression of either POMT1 or POMT2 alone is insufficient. Essentially dedicated to O-mannosylation of alpha-DAG1 and few other proteins but not of cadherins and protocaherins. In Rattus norvegicus (Rat), this protein is Protein O-mannosyl-transferase 1 (Pomt1).